The chain runs to 289 residues: Shikimate dehydrogenase (NADP(+)) (289 aa).

Shikimate is bound by residues 19–21 and Thr-66; that span reads SLS. The active-site Proton acceptor is Lys-70. Positions 91 and 106 each coordinate shikimate. NADP(+) is bound by residues 131–135 and Leu-229; that span reads GNGGA. Tyr-231 serves as a coordination point for shikimate. Gly-252 provides a ligand contact to NADP(+).

This sequence belongs to the shikimate dehydrogenase family. Homodimer.

It carries out the reaction shikimate + NADP(+) = 3-dehydroshikimate + NADPH + H(+). It participates in metabolic intermediate biosynthesis; chorismate biosynthesis; chorismate from D-erythrose 4-phosphate and phosphoenolpyruvate: step 4/7. Its function is as follows. Involved in the biosynthesis of the chorismate, which leads to the biosynthesis of aromatic amino acids. Catalyzes the reversible NADPH linked reduction of 3-dehydroshikimate (DHSA) to yield shikimate (SA). In Nostoc sp. (strain PCC 7120 / SAG 25.82 / UTEX 2576), this protein is Shikimate dehydrogenase (NADP(+)).